Reading from the N-terminus, the 473-residue chain is GTPase Der (473 aa).

2 EngA-type G domains span residues 3-167 (FTVA…GKDR) and 203-378 (LRVA…RVWN). Residues 9–16 (GRPNVGKS), 56–60 (DTAGL), 119–122 (NKSE), 209–216 (GRPNAGKS), 256–260 (DTAGM), and 321–324 (NKWD) contribute to the GTP site. One can recognise a KH-like domain in the interval 379–463 (KRISTAKLNR…PIRIHFRSAE (85 aa)).

It belongs to the TRAFAC class TrmE-Era-EngA-EngB-Septin-like GTPase superfamily. EngA (Der) GTPase family. As to quaternary structure, associates with the 50S ribosomal subunit.

In terms of biological role, GTPase that plays an essential role in the late steps of ribosome biogenesis. The chain is GTPase Der from Rhizobium leguminosarum bv. trifolii (strain WSM2304).